We begin with the raw amino-acid sequence, 160 residues long: Cytochrome c-type biogenesis protein CcmE (160 aa).

The Cytoplasmic portion of the chain corresponds to 1–9 (MRGLKKKRR). Residues 10–30 (IQIIAIAAVALTIATIMIGTA) traverse the membrane as a helical; Signal-anchor for type II membrane protein segment. Residues 31 to 160 (MRDGINFFRS…DGGYGGASGS (130 aa)) lie on the Periplasmic side of the membrane. Heme-binding residues include His123 and Tyr127. The segment at 141-160 (VYKDPNATDADGGYGGASGS) is disordered.

This sequence belongs to the CcmE/CycJ family.

The protein resides in the cell inner membrane. In terms of biological role, heme chaperone required for the biogenesis of c-type cytochromes. Transiently binds heme delivered by CcmC and transfers the heme to apo-cytochromes in a process facilitated by CcmF and CcmH. The chain is Cytochrome c-type biogenesis protein CcmE from Dinoroseobacter shibae (strain DSM 16493 / NCIMB 14021 / DFL 12).